The following is a 166-amino-acid chain: Large ribosomal subunit protein uL10 (166 aa).

This sequence belongs to the universal ribosomal protein uL10 family. In terms of assembly, part of the ribosomal stalk of the 50S ribosomal subunit. The N-terminus interacts with L11 and the large rRNA to form the base of the stalk. The C-terminus forms an elongated spine to which L12 dimers bind in a sequential fashion forming a multimeric L10(L12)X complex.

Its function is as follows. Forms part of the ribosomal stalk, playing a central role in the interaction of the ribosome with GTP-bound translation factors. This is Large ribosomal subunit protein uL10 from Ectopseudomonas mendocina (strain ymp) (Pseudomonas mendocina).